The chain runs to 91 residues: Small ribosomal subunit protein bS20 (91 aa).

A compositionally biased stretch (basic and acidic residues) spans 1-18; sequence MPLHKSAEKRLRQSDRKN. Positions 1 to 25 are disordered; that stretch reads MPLHKSAEKRLRQSDRKNARNRARK.

It belongs to the bacterial ribosomal protein bS20 family.

Its function is as follows. Binds directly to 16S ribosomal RNA. This is Small ribosomal subunit protein bS20 from Chlorobium phaeovibrioides (strain DSM 265 / 1930) (Prosthecochloris vibrioformis (strain DSM 265)).